Reading from the N-terminus, the 393-residue chain is ATP phosphoribosyltransferase regulatory subunit (393 aa).

The protein belongs to the class-II aminoacyl-tRNA synthetase family. HisZ subfamily. As to quaternary structure, heteromultimer composed of HisG and HisZ subunits.

The protein resides in the cytoplasm. It participates in amino-acid biosynthesis; L-histidine biosynthesis; L-histidine from 5-phospho-alpha-D-ribose 1-diphosphate: step 1/9. Its function is as follows. Required for the first step of histidine biosynthesis. May allow the feedback regulation of ATP phosphoribosyltransferase activity by histidine. This chain is ATP phosphoribosyltransferase regulatory subunit, found in Nitrosospira multiformis (strain ATCC 25196 / NCIMB 11849 / C 71).